We begin with the raw amino-acid sequence, 1299 residues long: DNA-directed RNA polymerase subunit beta' (1299 aa).

C60, C62, C75, and C78 together coordinate Zn(2+). The tract at residues 385 to 405 (GRRGRPVTGPGNRPLKSLSDM) is disordered. Mg(2+) contacts are provided by D535, D537, and D539. Zn(2+)-binding residues include C886, C962, C969, and C972.

The protein belongs to the RNA polymerase beta' chain family. As to quaternary structure, the RNAP catalytic core consists of 2 alpha, 1 beta, 1 beta' and 1 omega subunit. When a sigma factor is associated with the core the holoenzyme is formed, which can initiate transcription. Mg(2+) is required as a cofactor. The cofactor is Zn(2+).

It catalyses the reaction RNA(n) + a ribonucleoside 5'-triphosphate = RNA(n+1) + diphosphate. Its function is as follows. DNA-dependent RNA polymerase catalyzes the transcription of DNA into RNA using the four ribonucleoside triphosphates as substrates. The protein is DNA-directed RNA polymerase subunit beta' of Streptomyces avermitilis (strain ATCC 31267 / DSM 46492 / JCM 5070 / NBRC 14893 / NCIMB 12804 / NRRL 8165 / MA-4680).